We begin with the raw amino-acid sequence, 152 residues long: 3-hydroxyacyl-[acyl-carrier-protein] dehydratase FabZ (152 aa).

Residue His-58 is part of the active site.

Belongs to the thioester dehydratase family. FabZ subfamily.

The protein resides in the cytoplasm. It carries out the reaction a (3R)-hydroxyacyl-[ACP] = a (2E)-enoyl-[ACP] + H2O. Functionally, involved in unsaturated fatty acids biosynthesis. Catalyzes the dehydration of short chain beta-hydroxyacyl-ACPs and long chain saturated and unsaturated beta-hydroxyacyl-ACPs. The polypeptide is 3-hydroxyacyl-[acyl-carrier-protein] dehydratase FabZ (Prochlorococcus marinus (strain MIT 9515)).